The sequence spans 529 residues: Transcription activator of gluconeogenesis ERT1 (529 aa).

Residues 1 to 31 (MCTPDENDYKTSTDPDTSANTNHTLEKKKRK) form a disordered region. Residues 14–23 (DPDTSANTNH) show a composition bias toward polar residues. A DNA-binding region (zn(2)-C6 fungal-type) is located at residues 40 to 68 (CVNCSRLHVSCEAKRPCLRCISKGLTATC). The segment covering 174–193 (SNSTIGNSSNNSPTGTNTSP) has biased composition (low complexity). Positions 174–198 (SNSTIGNSSNNSPTGTNTSPEETEM) are disordered. The PAS domain maps to 408–480 (TLLEYVKFIA…KTLSKVAYRD (73 aa)).

This sequence belongs to the ERT1/acuK family.

It localises to the cytoplasm. It is found in the nucleus. Functionally, transcription factor which regulates nonfermentable carbon utilization. Activator of gluconeogenetic genes like PCK1. Involved in restriction of Ty1 transposition. In Saccharomyces cerevisiae (strain ATCC 204508 / S288c) (Baker's yeast), this protein is Transcription activator of gluconeogenesis ERT1 (ERT1).